The primary structure comprises 637 residues: 1-deoxy-D-xylulose-5-phosphate synthase (637 aa).

Residues H75 and 116-118 (AHS) each bind thiamine diphosphate. D147 contacts Mg(2+). Thiamine diphosphate-binding positions include 148-149 (GA), N177, Y288, and E370. N177 serves as a coordination point for Mg(2+).

The protein belongs to the transketolase family. DXPS subfamily. As to quaternary structure, homodimer. Mg(2+) serves as cofactor. The cofactor is thiamine diphosphate.

The enzyme catalyses D-glyceraldehyde 3-phosphate + pyruvate + H(+) = 1-deoxy-D-xylulose 5-phosphate + CO2. Its pathway is metabolic intermediate biosynthesis; 1-deoxy-D-xylulose 5-phosphate biosynthesis; 1-deoxy-D-xylulose 5-phosphate from D-glyceraldehyde 3-phosphate and pyruvate: step 1/1. Its function is as follows. Catalyzes the acyloin condensation reaction between C atoms 2 and 3 of pyruvate and glyceraldehyde 3-phosphate to yield 1-deoxy-D-xylulose-5-phosphate (DXP). In Cupriavidus metallidurans (strain ATCC 43123 / DSM 2839 / NBRC 102507 / CH34) (Ralstonia metallidurans), this protein is 1-deoxy-D-xylulose-5-phosphate synthase.